The primary structure comprises 393 residues: Cyclin CCL1 (393 aa).

A compositionally biased stretch (polar residues) spans 1 to 19 (MTDIQLNGKSTLDTPSATM). 2 disordered regions span residues 1–45 (MTDI…RISD) and 289–325 (SREG…SEEY). Composition is skewed to basic and acidic residues over residues 21–35 (AKEK…DENN) and 300–321 (NEKE…KSTE).

It belongs to the cyclin family. Cyclin C subfamily. CCL1 and KIN28 form the TFIIK complex, a component of TFIIH holo complex. Component of a complex consisting of KIN28, CCL1 and TFB3.

Functionally, regulatory component of the TFIIK complex (KIN28-CCL1 dimer) which is the protein kinase component of transcription factor IIH (TFIIH) and phosphorylates the C-terminal domain of RNA polymerase II during transition from transcription to elongation after preinitiation complex (PIC) formation, thereby positively regulating transcription. TFIIH (or factor B) is essential for both basal and activated transcription, and is involved in nucleotide excision repair (NER) of damaged DNA. TFIIH has DNA-dependent ATPase activity and is essential for polymerase II transcription in vitro. The sequence is that of Cyclin CCL1 (CCL1) from Saccharomyces cerevisiae (strain ATCC 204508 / S288c) (Baker's yeast).